A 356-amino-acid chain; its full sequence is MSL complex subunit 3B (356 aa).

One can recognise an MRG domain in the interval glutamate 2–proline 350. 2 disordered regions span residues threonine 135–aspartate 210 and lysine 225–phenylalanine 247. The segment covering leucine 142 to serine 156 has biased composition (low complexity). 2 stretches are compositionally biased toward polar residues: residues alanine 178–threonine 189 and histidine 229–glycine 243.

It is found in the nucleus. Its function is as follows. Probable non-catalytic component of the MSL histone acetyltransferase complex, a multiprotein complex that mediates the majority of histone H4 acetylation at 'Lys-16' (H4K16ac), an epigenetic mark that prevents chromatin compaction. The chain is MSL complex subunit 3B from Homo sapiens (Human).